The primary structure comprises 396 residues: 8-amino-7-oxononanoate synthase (396 aa).

Residue Arg29 participates in substrate binding. 116 to 117 (GY) is a binding site for pyridoxal 5'-phosphate. Position 141 (His141) interacts with substrate. 3 residues coordinate pyridoxal 5'-phosphate: Ser187, His215, and Thr243. N6-(pyridoxal phosphate)lysine is present on Lys246. Residue Thr360 participates in substrate binding.

Belongs to the class-II pyridoxal-phosphate-dependent aminotransferase family. BioF subfamily. As to quaternary structure, homodimer. It depends on pyridoxal 5'-phosphate as a cofactor.

It carries out the reaction 6-carboxyhexanoyl-[ACP] + L-alanine + H(+) = (8S)-8-amino-7-oxononanoate + holo-[ACP] + CO2. It participates in cofactor biosynthesis; biotin biosynthesis. Catalyzes the decarboxylative condensation of pimeloyl-[acyl-carrier protein] and L-alanine to produce 8-amino-7-oxononanoate (AON), [acyl-carrier protein], and carbon dioxide. The chain is 8-amino-7-oxononanoate synthase from Nitrosospira multiformis (strain ATCC 25196 / NCIMB 11849 / C 71).